The chain runs to 378 residues: Cobalt-precorrin-5B C(1)-methyltransferase (378 aa).

Belongs to the CbiD family.

The enzyme catalyses Co-precorrin-5B + S-adenosyl-L-methionine = Co-precorrin-6A + S-adenosyl-L-homocysteine. It functions in the pathway cofactor biosynthesis; adenosylcobalamin biosynthesis; cob(II)yrinate a,c-diamide from sirohydrochlorin (anaerobic route): step 6/10. Functionally, catalyzes the methylation of C-1 in cobalt-precorrin-5B to form cobalt-precorrin-6A. In Photorhabdus laumondii subsp. laumondii (strain DSM 15139 / CIP 105565 / TT01) (Photorhabdus luminescens subsp. laumondii), this protein is Cobalt-precorrin-5B C(1)-methyltransferase.